Here is a 299-residue protein sequence, read N- to C-terminus: MNLVMEKTFEQYEKLFSMEEQKREDVFRYTMMRPFEKMWTAIQVPLKAKEPNGYDVIMAAKMLGYLDVRDAESGQKALQILKESHVSETAESALRQCIFFAEREQLRVNAKEIKFGLYIADPNKLQLQKGYCGFGGIPGFIHVWINPNSYNLPRIPSIIAHEFHHNVRFSYIDFHHGSVSVGDYLVIEGLAESFARELFGTERLGPWVTRFDHEDLQYSIDVINEVLDVKGFSEVSRYMFGDPIANDQGFKPAGLSAFAGYAVGYHAVQSFMNQHHITISEATRLDAKTIISQCGLFST.

This is an uncharacterized protein from Bacillus subtilis (strain 168).